A 1056-amino-acid chain; its full sequence is MCDQGEVSSQNSSDYKEQRPTPRPNLPKIEESVLAFWSSDKTFEASLEQRQHGKRWVFYDGPPFANGLPHFGHLLTGYIKDAIPRYQTMRGQYVPRVFGWDTHGLPAELEAMKRLGITEKSQIESMGIASFNEAARKSVLTYVDQWEEYVNRQARWVDFKNGYKTLDLDYMESVLWAFKTLYKKGVIYEGYKVLPYCWNDQTPLSNHELRMDDEVYKQRLDDSLTVTFPLIGQKAKTCGLDGVAALAWTTTPWTLPSNMALIVSPNVEYVVVSSARQNSNSDFLLCKSSLDSYAECLGYESGQDARASIRRTLLGKEIEGIHYKPLFDYYADLHNAFTILSDNYVDVTEGTGIVHASPAHGEDDKRVCDAFGVPTVVSINDAACFTDVISNYAGMHIFDANAVIRSDLSRDGRILRHESYKHSYPHCWRCRSPLIYKAVTSWFFRITDSVNRMLELNQQINWVPKSVKNGQFAKWLSSAKDWSISRTRYWGTPIPVWKSDNPEYPRIDCYGSLKELEDDFGIKLTDLHRPEIDRLTRPNPDDPTGASTMRRVPDVLDVWFDAASMPFAQLHYPFENIERFEANKSADFIVEYAGQIRGWFYLLHAMSTALFDGVAFKNAICHGIVLGDDGQKASKSLRNYPDVYDVFENEGSDAVRWYLISSSILRGGSLIVSRKKIQDAIRQYITPLWSSWYFFHIYSEAARPGGYKARFSVDSQDILDRYILSKTGLLVEDVTRFMDSFDMASAALQLRDFVAVLTNWYIRRSRDRFWDGSDTGAFDTLYTVLETLCRLGAVFVPMVSEHVYKCLTNSRSVHLSDWPDVATFPNETGLVETMDRVRKICSTGLSLRKRLGIKARQPLSSAHIRVAQVGSLAQYKDIISGELNVKTVSIEEGSCTQRMLKILPRVAGPRLAGDVQTVIAAARRGDWTDHDGHVTAGGIPLLENEYQLVAGAQDSKNSQPLPFGGSVTLDTRIDETLRSEGVARDTVRQIQIARKEKDLNITDRISLEVCVPDEQVKNNLLAFSELICKETLCDRLDILVKKGIDGITVSLEKFRQ.

The span at 1–13 shows a compositional bias: polar residues; sequence MCDQGEVSSQNSS. The tract at residues 1 to 26 is disordered; the sequence is MCDQGEVSSQNSSDYKEQRPTPRPNL. The 'HIGH' region signature appears at 63–73; the sequence is PFANGLPHFGH. The short motif at 632-636 is the 'KMSKS' region element; the sequence is KASKS. An ATP-binding site is contributed by Lys635.

It belongs to the class-I aminoacyl-tRNA synthetase family. IleS type 2 subfamily. In terms of assembly, monomer. Zn(2+) serves as cofactor.

The protein localises to the cytoplasm. It carries out the reaction tRNA(Ile) + L-isoleucine + ATP = L-isoleucyl-tRNA(Ile) + AMP + diphosphate. Its function is as follows. Catalyzes the attachment of isoleucine to tRNA(Ile). As IleRS can inadvertently accommodate and process structurally similar amino acids such as valine, to avoid such errors it has two additional distinct tRNA(Ile)-dependent editing activities. One activity is designated as 'pretransfer' editing and involves the hydrolysis of activated Val-AMP. The other activity is designated 'posttransfer' editing and involves deacylation of mischarged Val-tRNA(Ile). The polypeptide is Isoleucine--tRNA ligase (Tropheryma whipplei (strain TW08/27) (Whipple's bacillus)).